The following is a 507-amino-acid chain: tRNA (guanine(6)-N(2))-methyltransferase THUMP3 (507 aa).

The THUMP domain maps to 165-285 (KIDQRNVKKE…DNEVIVGIAL (121 aa)).

Belongs to the methyltransferase superfamily. In terms of assembly, part of the heterodimeric THUMPD3-TRM112 methyltransferase complex; this complex forms an active tRNA methyltransferase, where TRMT112 acts as an activator of the catalytic subunit THUMPD3.

It is found in the cytoplasm. It catalyses the reaction guanosine(6) in tRNA + S-adenosyl-L-methionine = N(2)-methylguanosine(6) in tRNA + S-adenosyl-L-homocysteine + H(+). The enzyme catalyses guanosine(7) in tRNA + S-adenosyl-L-methionine = N(2)-methylguanosine(7) in tRNA + S-adenosyl-L-homocysteine + H(+). Functionally, catalytic subunit of the THUMPD3-TRM112 methyltransferase complex, that specifically mediates the S-adenosyl-L-methionine-dependent N(2)-methylation of guanosine nucleotide at position 6 (m2G6) in tRNAs. This is one of the major tRNA (guanine-N(2))-methyltransferases. Also catalyzes the S-adenosyl-L-methionine-dependent N(2)-methylation of guanosine nucleotide at position 7 of tRNA(Trp). The chain is tRNA (guanine(6)-N(2))-methyltransferase THUMP3 from Homo sapiens (Human).